The primary structure comprises 543 residues: Intermediate filament protein ifb-2 (543 aa).

The segment covering 1–10 (MSAVSYSMHR) has biased composition (polar residues). The disordered stretch occupies residues 1 to 27 (MSAVSYSMHRTTTTTSSSSHGGVSAGH). The head stretch occupies residues 1–42 (MSAVSYSMHRTTTTTSSSSHGGVSAGHAAEEFVASAEREKQE). Residues 39–388 (EKQEMQQLNS…KLVESEEGRF (350 aa)) form the IF rod domain. Residues 43–74 (MQQLNSRLEVYISRVRQLEDRNKELVIELDTL) form a coil 1A region. The linker 1 stretch occupies residues 75–88 (RGSLGNDIGQIKFK). The interval 89 to 223 (FNDSLVKVRR…RIHSQEITEL (135 aa)) is coil 1B. The linker 12 stretch occupies residues 224–240 (RTLLAQAPADTREFFKN). Residues 241–387 (ELALAIREIK…RKLVESEEGR (147 aa)) are coil 2. The segment at 388–542 (FTHVGQGVVV…SHIQTTVASS (155 aa)) is tail. The 119-residue stretch at 420-538 (TRSSFKRHAK…IEKASHIQTT (119 aa)) folds into the LTD domain.

The protein belongs to the intermediate filament family. In terms of tissue distribution, expression is restricted to a discrete circumferential subapical layer within the intestinal terminal web (known as the 'endotube'); this layer joins directly to the apical junction complexes that connect adjacent gut cells.

It localises to the cytoplasm. Its function is as follows. Cytoplasmic intermediate filaments provide mechanical strength to cells. Not essential protein. Component of the terminal web (organelle-depleted, intermediate filament-rich layer of cytoplasm that underlies the apical microvilli of polarized epithelial cells) in embryonic through to adult gut cells. Correct localization of filaments requires let-413. This Caenorhabditis elegans protein is Intermediate filament protein ifb-2 (ifb-2).